The sequence spans 344 residues: DNA integrity scanning protein DisA (344 aa).

Positions 1-133 (MALLAPGTPI…GRRYLIERPE (133 aa)) constitute a DAC domain. Residues Gly61 and 92–96 (TRHRT) each bind ATP.

This sequence belongs to the DisA family. Homooctamer. It depends on Mg(2+) as a cofactor.

It carries out the reaction 2 ATP = 3',3'-c-di-AMP + 2 diphosphate. Its function is as follows. Participates in a DNA-damage check-point. DisA forms globular foci that rapidly scan along the chromosomes searching for lesions. In terms of biological role, also has diadenylate cyclase activity, catalyzing the condensation of 2 ATP molecules into cyclic di-AMP (c-di-AMP). c-di-AMP likely acts as a signaling molecule that may couple DNA integrity with a cellular process. This Cutibacterium acnes (strain DSM 16379 / KPA171202) (Propionibacterium acnes) protein is DNA integrity scanning protein DisA.